A 439-amino-acid polypeptide reads, in one-letter code: GTPase Obg (439 aa).

In terms of domain architecture, Obg spans 5–164 (TDFFDQATIV…LTLELELKML (160 aa)). The region spanning 165 to 335 (ADVGLVGFPN…LLQRVAELLR (171 aa)) is the OBG-type G domain. GTP-binding positions include 171–178 (GFPNAGKS), 196–200 (FTTLT), 217–220 (DIPG), 287–290 (NKAD), and 316–318 (SAA). Mg(2+) is bound by residues serine 178 and threonine 198. A disordered region spans residues 337-359 (DPPPQRDPVDPDEPPLEWPLPPV). Residues 356-433 (LPPVDENAFT…IGRAELVWDD (78 aa)) enclose the OCT domain.

Belongs to the TRAFAC class OBG-HflX-like GTPase superfamily. OBG GTPase family. As to quaternary structure, monomer. Mg(2+) serves as cofactor.

The protein localises to the cytoplasm. Functionally, an essential GTPase which binds GTP, GDP and possibly (p)ppGpp with moderate affinity, with high nucleotide exchange rates and a fairly low GTP hydrolysis rate. Plays a role in control of the cell cycle, stress response, ribosome biogenesis and in those bacteria that undergo differentiation, in morphogenesis control. The chain is GTPase Obg from Chloroflexus aggregans (strain MD-66 / DSM 9485).